We begin with the raw amino-acid sequence, 370 residues long: Phosphate acyltransferase (370 aa).

It belongs to the PlsX family. Homodimer. Probably interacts with PlsY.

The protein resides in the cytoplasm. It catalyses the reaction a fatty acyl-[ACP] + phosphate = an acyl phosphate + holo-[ACP]. It functions in the pathway lipid metabolism; phospholipid metabolism. Catalyzes the reversible formation of acyl-phosphate (acyl-PO(4)) from acyl-[acyl-carrier-protein] (acyl-ACP). This enzyme utilizes acyl-ACP as fatty acyl donor, but not acyl-CoA. The chain is Phosphate acyltransferase from Paracoccus denitrificans (strain Pd 1222).